The following is a 136-amino-acid chain: Histone H3.2 (136 aa).

The interval 1-42 (MARTKQTARKSTGGKAPRKQLATKAARKSAPSAGGVKKPHRY) is disordered. At Lys-5 the chain carries N6,N6,N6-trimethyllysine; alternate. Lys-5 carries the post-translational modification N6,N6-dimethyllysine; alternate. 2 positions are modified to N6-methyllysine; alternate: Lys-5 and Lys-10. At Lys-10 the chain carries N6-acetyllysine; alternate. Ser-11 carries the phosphoserine modification. Lys-15 bears the N6,N6-dimethyllysine; alternate mark. Lys-15, Lys-19, Lys-24, Lys-28, and Lys-37 each carry N6-acetyllysine; alternate. 4 positions are modified to N6-methyllysine; alternate: Lys-19, Lys-24, Lys-28, and Lys-37. N6,N6,N6-trimethyllysine; alternate is present on residues Lys-28 and Lys-37. An N6,N6-dimethyllysine; alternate mark is found at Lys-28 and Lys-37. N6-acetyllysine is present on residues Lys-57 and Lys-65. An N6,N6,N6-trimethyllysine; alternate modification is found at Lys-80. Lys-80 is modified (N6,N6-dimethyllysine; alternate). At Lys-80 the chain carries N6-methyllysine; alternate.

The protein belongs to the histone H3 family. The nucleosome is a histone octamer containing two molecules each of H2A, H2B, H3 and H4 assembled in one H3-H4 heterotetramer and two H2A-H2B heterodimers. The octamer wraps approximately 147 bp of DNA. Phosphorylated to form H3S10ph. H3S10ph promotes subsequent H3K14ac formation and is required for transcriptional activation through TBP recruitment to the promoters. Post-translationally, mono-, di- and trimethylated by the COMPASS complex to form H3K4me1/2/3. H3K4me activates gene expression by regulating transcription elongation and plays a role in telomere length maintenance. H3K4me enrichment correlates with transcription levels, and occurs in a 5' to 3' gradient with H3K4me3 enrichment at the 5'-end of genes, shifting to H3K4me2 and then H3K4me1. Methylated by SET2 to form H3K36me. H3K36me represses gene expression. Methylated by DOT1 to form H3K79me. H3K79me is required for association of SIR proteins with telomeric regions and for telomeric silencing. The COMPASS-mediated formation of H3K4me2/3 and the DOT1-mediated formation of H3K79me require H2BK123ub1. In terms of processing, acetylation of histone H3 leads to transcriptional activation. H3K14ac formation by GCN5 is promoted by H3S10ph. H3K14ac can also be formed by ESA1. H3K56ac formation occurs predominantly in newly synthesized H3 molecules during G1, S and G2/M of the cell cycle and may be involved in DNA repair.

The protein resides in the nucleus. The protein localises to the chromosome. In terms of biological role, core component of nucleosome. Nucleosomes wrap and compact DNA into chromatin, limiting DNA accessibility to the cellular machineries which require DNA as a template. Histones thereby play a central role in transcription regulation, DNA repair, DNA replication and chromosomal stability. DNA accessibility is regulated via a complex set of post-translational modifications of histones, also called histone code, and nucleosome remodeling. In Mycosarcoma maydis (Corn smut fungus), this protein is Histone H3.2 (HHT2).